We begin with the raw amino-acid sequence, 241 residues long: MFITTKKSLIALVLATAGLISSPVSFATETGAQPNLGATLTQLTQQYPIHWISIEQVAESLKGKAPISVGFDIDDTLLFSSPAFFYGKQKFSPDSNAFLKNQKFWDAVSSSGWDRFSIPKDSGRALMELHLKRGDHVYFITGRPMPSNGKEDLTQTLKDDFKIPDNQLNKVIFAGTKQDAKVEYMQKYHITIFYGDSDNDIQDARKAGAEGIRVLRPLNSTNKPMPKNGAFGEKVIVNSQY.

Positions 1–27 are cleaved as a signal peptide; that stretch reads MFITTKKSLIALVLATAGLISSPVSFA. Residue aspartate 72 is the Nucleophile of the active site. Mg(2+)-binding residues include aspartate 72 and aspartate 74. Residue aspartate 74 is the Proton donor of the active site. Residues 141 to 142 and lysine 181 each bind substrate; that span reads TG. Residue aspartate 196 participates in Mg(2+) binding.

It belongs to the class B bacterial acid phosphatase family. Homotetramer. Mg(2+) is required as a cofactor.

The protein localises to the periplasm. It catalyses the reaction a phosphate monoester + H2O = an alcohol + phosphate. Its function is as follows. Dephosphorylates several organic phosphate monoesters. Also has a phosphotransferase activity catalyzing the transfer of low-energy phosphate groups from organic phosphate monoesters to free hydroxyl groups of various organic compounds. The polypeptide is Class B acid phosphatase (Edwardsiella ictaluri (strain 93-146)).